A 773-amino-acid polypeptide reads, in one-letter code: 3-isopropylmalate dehydratase (773 aa).

[4Fe-4S] cluster-binding residues include Cys-355, Cys-415, and Cys-418.

The protein belongs to the aconitase/IPM isomerase family. As to quaternary structure, monomer. Requires [4Fe-4S] cluster as cofactor.

It carries out the reaction (2R,3S)-3-isopropylmalate = (2S)-2-isopropylmalate. It functions in the pathway amino-acid biosynthesis; L-leucine biosynthesis; L-leucine from 3-methyl-2-oxobutanoate: step 2/4. Catalyzes the isomerization between 2-isopropylmalate and 3-isopropylmalate, via the formation of 2-isopropylmaleate. The protein is 3-isopropylmalate dehydratase (LEU1) of Mycosarcoma maydis (Corn smut fungus).